A 156-amino-acid chain; its full sequence is Small ribosomal subunit protein uS7 (156 aa).

This sequence belongs to the universal ribosomal protein uS7 family. Part of the 30S ribosomal subunit. Contacts proteins S9 and S11.

Its function is as follows. One of the primary rRNA binding proteins, it binds directly to 16S rRNA where it nucleates assembly of the head domain of the 30S subunit. Is located at the subunit interface close to the decoding center, probably blocks exit of the E-site tRNA. In Shewanella sp. (strain W3-18-1), this protein is Small ribosomal subunit protein uS7.